We begin with the raw amino-acid sequence, 337 residues long: Glyceraldehyde-3-phosphate dehydrogenase, cytosolic (337 aa).

Positions 1 to 151 (MAKVKVGING…YKSDLNIVSN (151 aa)) are binding to NAD. NAD(+) is bound by residues 13–14 (RI), D35, and R82. Residues 152-337 (ASCTTNCLAP…DLIMHISKCQ (186 aa)) form a catalytic region. D-glyceraldehyde 3-phosphate is bound by residues 153–155 (SCT), T184, 213–214 (TG), and R236. C154 (nucleophile) is an active-site residue. Residue N318 coordinates NAD(+).

It belongs to the glyceraldehyde-3-phosphate dehydrogenase family. In terms of assembly, homotetramer.

It is found in the cytoplasm. It catalyses the reaction D-glyceraldehyde 3-phosphate + phosphate + NAD(+) = (2R)-3-phospho-glyceroyl phosphate + NADH + H(+). The protein operates within carbohydrate degradation; glycolysis; pyruvate from D-glyceraldehyde 3-phosphate: step 1/5. Its function is as follows. Key enzyme in glycolysis that catalyzes the first step of the pathway by converting D-glyceraldehyde 3-phosphate (G3P) into 3-phospho-D-glyceroyl phosphate. Essential for the maintenance of cellular ATP levels and carbohydrate metabolism. This chain is Glyceraldehyde-3-phosphate dehydrogenase, cytosolic (GAPC), found in Mesembryanthemum crystallinum (Common ice plant).